The following is a 199-amino-acid chain: Recombination protein RecR (199 aa).

Residues 58 to 73 (CSVCNNITDVDPCVFC) form a C4-type zinc finger. A Toprim domain is found at 81–176 (RLVCVVEEPT…RLTRIATGVP (96 aa)).

This sequence belongs to the RecR family.

Functionally, may play a role in DNA repair. It seems to be involved in an RecBC-independent recombinational process of DNA repair. It may act with RecF and RecO. The chain is Recombination protein RecR from Acidobacterium capsulatum (strain ATCC 51196 / DSM 11244 / BCRC 80197 / JCM 7670 / NBRC 15755 / NCIMB 13165 / 161).